Here is a 455-residue protein sequence, read N- to C-terminus: Zinc finger and BTB domain-containing protein 8A.2 (455 aa).

The BTB domain maps to 24–92; that stretch reads CDCHIMIDGH…MYSGKLNLSG (69 aa). 2 C2H2-type zinc fingers span residues 299 to 321 and 327 to 350; these read FKCP…LLCH and YPCQ…RTIH.

The protein resides in the nucleus. In terms of biological role, may be involved in transcriptional regulation. The sequence is that of Zinc finger and BTB domain-containing protein 8A.2 (zbtb8a.2) from Xenopus tropicalis (Western clawed frog).